A 692-amino-acid polypeptide reads, in one-letter code: SH3 domain-containing protein 21 (692 aa).

The tract at residues methionine 1–tyrosine 60 is disordered. The SH3 domain occupies serine 65 to proline 126. Disordered regions lie at residues proline 132–proline 501, proline 536–threonine 605, and valine 672–tyrosine 692. Residues proline 177–serine 186 show a composition bias toward basic and acidic residues. Polar residues predominate over residues threonine 210 to serine 220. Composition is skewed to basic and acidic residues over residues valine 378–glutamine 396, asparagine 490–proline 501, and serine 542–valine 582. A coiled-coil region spans residues serine 628 to lysine 678. A compositionally biased stretch (polar residues) spans methionine 673–tyrosine 692.

This chain is SH3 domain-containing protein 21 (SH3D21), found in Macaca fascicularis (Crab-eating macaque).